Here is a 594-residue protein sequence, read N- to C-terminus: TOX high mobility group box family member 4-B (594 aa).

Disordered regions lie at residues 160–225 (GTIL…PQKP) and 522–545 (ESPP…SPQC). Positions 207–217 (KPKTPKKKKKK) are enriched in basic residues. Positions 212 to 217 (KKKKKK) match the Nuclear localization signal motif. Positions 222–290 (PQKPLSAYAL…EYLKALALYK (69 aa)) form a DNA-binding region, HMG box.

Component of the PNUTS-PP1 phosphatase complex.

Its subcellular location is the nucleus. The protein resides in the chromosome. Functionally, transcription factor that modulates cell fate reprogramming from the somatic state to the pluripotent and neuronal fate. Also acts as a regulatory component of protein phosphatase 1 (PP1) complexes. Component of the PNUTS-PP1 protein phosphatase complex, a PP1 complex that regulates RNA polymerase II transcription pause-release. PNUTS-PP1 also plays a role in the control of chromatin structure and cell cycle progression during the transition from mitosis into interphase. This chain is TOX high mobility group box family member 4-B (tox4-b), found in Xenopus laevis (African clawed frog).